The sequence spans 375 residues: UDP-N-acetylglucosamine--N-acetylmuramyl-(pentapeptide) pyrophosphoryl-undecaprenol N-acetylglucosamine transferase (375 aa).

UDP-N-acetyl-alpha-D-glucosamine contacts are provided by residues 13-15, Asn-124, Arg-165, Ser-193, and Gln-294; that span reads TGG.

This sequence belongs to the glycosyltransferase 28 family. MurG subfamily.

The protein localises to the cell inner membrane. It catalyses the reaction di-trans,octa-cis-undecaprenyl diphospho-N-acetyl-alpha-D-muramoyl-L-alanyl-D-glutamyl-meso-2,6-diaminopimeloyl-D-alanyl-D-alanine + UDP-N-acetyl-alpha-D-glucosamine = di-trans,octa-cis-undecaprenyl diphospho-[N-acetyl-alpha-D-glucosaminyl-(1-&gt;4)]-N-acetyl-alpha-D-muramoyl-L-alanyl-D-glutamyl-meso-2,6-diaminopimeloyl-D-alanyl-D-alanine + UDP + H(+). Its pathway is cell wall biogenesis; peptidoglycan biosynthesis. Its function is as follows. Cell wall formation. Catalyzes the transfer of a GlcNAc subunit on undecaprenyl-pyrophosphoryl-MurNAc-pentapeptide (lipid intermediate I) to form undecaprenyl-pyrophosphoryl-MurNAc-(pentapeptide)GlcNAc (lipid intermediate II). This chain is UDP-N-acetylglucosamine--N-acetylmuramyl-(pentapeptide) pyrophosphoryl-undecaprenol N-acetylglucosamine transferase, found in Chelativorans sp. (strain BNC1).